The sequence spans 308 residues: Atrochrysone carboxyl ACP thioesterase (308 aa).

The Zn(2+) site is built by His99, His101, Asp103, and His104. Asp103 functions as the Proton donor/acceptor in the catalytic mechanism.

It belongs to the metallo-beta-lactamase superfamily. It depends on Zn(2+) as a cofactor.

It catalyses the reaction atrochrysone carboxyl-[ACP] + H2O = atrochrysone carboxylate + holo-[ACP] + H(+). The protein operates within secondary metabolite biosynthesis. Its function is as follows. Atrochrysone carboxyl ACP thioesterase; part of the gene cluster that mediates the biosynthesis of physcion, a natural anthraquinone fungicide that can prevent plant fungal infections. The pathway begins with the polyketide synthase AcPKS that condenses 8 malonyl-CoA units to synthesize atrochrysone thioester which is released from the synthase by the atrochrysone carboxyl ACP thioesterase AcTE that breaks the thioester bond and leads to free atrochrysone carboxylic acid. Spontaneous decarboxylation of atrochrysone carboxylic acid leads to the formation of atrochrysone. Then, atrochrysone undergoes spontaneous dehydration and oxidation, giving the products emodin anthrone and emodin. The O-methyltransferase AcOMT then methylates the C-6 hydroxyl of emodin to form physcion. The chain is Atrochrysone carboxyl ACP thioesterase from Aspergillus chevalieri (Eurotium chevalieri).